The sequence spans 284 residues: Short-chain dehydrogenase RED1 (284 aa).

Ile11, Thr37, Asp58, Asn86, Tyr151, Lys155, Val184, and Thr186 together coordinate NADP(+). Tyr151 serves as the catalytic Proton acceptor. Lys155 serves as the catalytic Lowers pKa of active site Tyr.

The protein belongs to the short-chain dehydrogenases/reductases (SDR) family.

The protein operates within polyketide biosynthesis. Short-chain dehydrogenase; part of the gene cluster that mediates the biosynthesis of pyriculol and pyriculariol, two heptaketides that induce lesion formation upon application on rice leaves but are dispensable for pathogenicity. The highly reducing polyketide synthase synthesizes the heptaketide backbone of pyriculol and pyriculariol. Pyriculol and pyriculariol contain several hydroxyl moieties and double bonds, so it can be assumed that several reduction steps occur during biosynthesis. These reactions could be executed by PKS19 itself or partly by the tailoring enzymes OXR1, OXR2, RED1, RED2 or RED3, identified within the cluster. The FAD-linked oxidoreductase OXR1 is the only tailoring enzyme for which the function has been determined yet, and is involved in the oxidation of dihydropyriculol and dihydropyriculariol into pyriculol and pyriculariol, respectively. In Pyricularia oryzae (strain 70-15 / ATCC MYA-4617 / FGSC 8958) (Rice blast fungus), this protein is Short-chain dehydrogenase RED1.